We begin with the raw amino-acid sequence, 281 residues long: NADPH-dependent 7-cyano-7-deazaguanine reductase (281 aa).

I87–S89 is a binding site for substrate. S89 to K90 contacts NADPH. The active-site Thioimide intermediate is the C188. Catalysis depends on D195, which acts as the Proton donor. Position 227–228 (H227–E228) interacts with substrate. R256–G257 provides a ligand contact to NADPH. The tract at residues I261–Q281 is disordered. Residues E268 to Q281 show a composition bias toward basic and acidic residues.

The protein belongs to the GTP cyclohydrolase I family. QueF type 2 subfamily. In terms of assembly, homodimer.

The protein resides in the cytoplasm. The enzyme catalyses 7-aminomethyl-7-carbaguanine + 2 NADP(+) = 7-cyano-7-deazaguanine + 2 NADPH + 3 H(+). The protein operates within tRNA modification; tRNA-queuosine biosynthesis. Catalyzes the NADPH-dependent reduction of 7-cyano-7-deazaguanine (preQ0) to 7-aminomethyl-7-deazaguanine (preQ1). The polypeptide is NADPH-dependent 7-cyano-7-deazaguanine reductase (Vibrio vulnificus (strain YJ016)).